A 439-amino-acid polypeptide reads, in one-letter code: Serine hydroxymethyltransferase (439 aa).

Residue 127-129 (AHV) coordinates (6S)-5,6,7,8-tetrahydrofolate. At lysine 233 the chain carries N6-(pyridoxal phosphate)lysine.

Belongs to the SHMT family. As to quaternary structure, homodimer. Pyridoxal 5'-phosphate serves as cofactor.

The protein resides in the cytoplasm. It functions in the pathway amino-acid biosynthesis; glycine biosynthesis; glycine from L-serine: step 1/1. Catalyzes the reversible interconversion of serine and glycine with a modified folate serving as the one-carbon carrier. Also exhibits a pteridine-independent aldolase activity toward beta-hydroxyamino acids, producing glycine and aldehydes, via a retro-aldol mechanism. The sequence is that of Serine hydroxymethyltransferase from Aeropyrum pernix (strain ATCC 700893 / DSM 11879 / JCM 9820 / NBRC 100138 / K1).